The chain runs to 678 residues: Secretin ExeD (678 aa).

The N-terminal stretch at 1 to 25 is a signal peptide; the sequence is MINKGKSWRLATVAAALMMAGSAWA. Positions 26–122 are N0; the sequence is TEYSASFKNA…VVDETNPGIG (97 aa). Residues 124–188 form an N1 region; that stretch reads EMVTRVVPVR…EVVRRVDKAG (65 aa). The segment at 189-264 is N2; the sequence is DQEVDIIKLR…MVRQLDRDLQ (76 aa). Residues 267–347 form an N3 region; sequence GNTRVFYLKY…ELEQVVAKLD (81 aa). The segment at 352–602 is secretin; that stretch reads QVLVEAIIVE…VFIRPTILRD (251 aa). A s domain region spans residues 604–678; sequence HVYSGISSNK…GAQPFVQGNK (75 aa).

This sequence belongs to the bacterial secretin family. GSP D subfamily. Forms a cylindrical channel with 15 subunits.

It localises to the cell outer membrane. Involved in a type II secretion system (T2SS, formerly general secretion pathway, GSP) for the export of proteins. This subunit forms the outer membrane channel. The polypeptide is Secretin ExeD (exeD) (Aeromonas salmonicida).